Reading from the N-terminus, the 80-residue chain is Cytochrome c-553 (80 aa).

Positions 13, 16, 17, and 58 each coordinate heme c.

Binds 1 heme c group covalently per subunit.

Its subcellular location is the periplasm. Functionally, natural electron acceptor for a formate dehydrogenase. This Desulfomicrobium norvegicum (strain DSM 1741 / NCIMB 8310) (Desulfovibrio baculatus (strain Norway 4)) protein is Cytochrome c-553.